The chain runs to 100 residues: uncharacterized protein (100 aa).

The 100-residue stretch at 1–100 (MEPIEVFKAL…KLADFLKTEI (100 aa)) folds into the HTH arsR-type domain. The H-T-H motif DNA-binding region spans 44 to 67 (VSQITDKLKMTQSTASQYLTILLR).

This is an uncharacterized protein from Bacillus subtilis (strain 168).